A 247-amino-acid polypeptide reads, in one-letter code: Segregation and condensation protein A (247 aa).

This sequence belongs to the ScpA family. Component of a cohesin-like complex composed of ScpA, ScpB and the Smc homodimer, in which ScpA and ScpB bind to the head domain of Smc. The presence of the three proteins is required for the association of the complex with DNA.

It is found in the cytoplasm. In terms of biological role, participates in chromosomal partition during cell division. May act via the formation of a condensin-like complex containing Smc and ScpB that pull DNA away from mid-cell into both cell halves. The protein is Segregation and condensation protein A of Bacillus anthracis (strain A0248).